The primary structure comprises 282 residues: 4-hydroxy-3-methylbut-2-enyl diphosphate reductase (282 aa).

C12 lines the [4Fe-4S] cluster pocket. Residues H40 and H72 each coordinate (2E)-4-hydroxy-3-methylbut-2-enyl diphosphate. Positions 40 and 72 each coordinate dimethylallyl diphosphate. Positions 40 and 72 each coordinate isopentenyl diphosphate. C94 provides a ligand contact to [4Fe-4S] cluster. Position 122 (H122) interacts with (2E)-4-hydroxy-3-methylbut-2-enyl diphosphate. Dimethylallyl diphosphate is bound at residue H122. H122 is an isopentenyl diphosphate binding site. The active-site Proton donor is E124. T160 provides a ligand contact to (2E)-4-hydroxy-3-methylbut-2-enyl diphosphate. Residue C188 coordinates [4Fe-4S] cluster. Residues S216, N218, and S260 each contribute to the (2E)-4-hydroxy-3-methylbut-2-enyl diphosphate site. Dimethylallyl diphosphate contacts are provided by S216, N218, and S260. 3 residues coordinate isopentenyl diphosphate: S216, N218, and S260.

The protein belongs to the IspH family. The cofactor is [4Fe-4S] cluster.

The catalysed reaction is isopentenyl diphosphate + 2 oxidized [2Fe-2S]-[ferredoxin] + H2O = (2E)-4-hydroxy-3-methylbut-2-enyl diphosphate + 2 reduced [2Fe-2S]-[ferredoxin] + 2 H(+). It catalyses the reaction dimethylallyl diphosphate + 2 oxidized [2Fe-2S]-[ferredoxin] + H2O = (2E)-4-hydroxy-3-methylbut-2-enyl diphosphate + 2 reduced [2Fe-2S]-[ferredoxin] + 2 H(+). Its pathway is isoprenoid biosynthesis; dimethylallyl diphosphate biosynthesis; dimethylallyl diphosphate from (2E)-4-hydroxy-3-methylbutenyl diphosphate: step 1/1. It functions in the pathway isoprenoid biosynthesis; isopentenyl diphosphate biosynthesis via DXP pathway; isopentenyl diphosphate from 1-deoxy-D-xylulose 5-phosphate: step 6/6. Functionally, catalyzes the conversion of 1-hydroxy-2-methyl-2-(E)-butenyl 4-diphosphate (HMBPP) into a mixture of isopentenyl diphosphate (IPP) and dimethylallyl diphosphate (DMAPP). Acts in the terminal step of the DOXP/MEP pathway for isoprenoid precursor biosynthesis. This Geobacter metallireducens (strain ATCC 53774 / DSM 7210 / GS-15) protein is 4-hydroxy-3-methylbut-2-enyl diphosphate reductase.